The following is a 305-amino-acid chain: Phosphoinositol dihydroceramide synthase (305 aa).

An N-terminal signal peptide occupies residues 1 to 23; it reads MPSKKETLTVIVIMALFLLLTAA. The N-palmitoyl cysteine moiety is linked to residue cysteine 24. A lipid anchor (S-diacylglycerol cysteine) is attached at cysteine 24. The next 6 membrane-spanning stretches (helical) occupy residues 41–61, 117–137, 149–169, 216–236, 241–261, and 266–286; these read LFFA…FAIF, VFAG…GLCL, FALV…IHPA, FAAV…YAII, WYVI…AIYS, and IIDV…FEYG.

Its subcellular location is the membrane. The enzyme catalyses N-(2-hydroxy-fatty acyl)-dihydroceramide + a 1,2-diacyl-sn-glycero-3-phospho-(1D-myo-inositol) = inositol-1-phospho-N-(2-hydroxy-fatty acyl)-dihydroceramide + a 1,2-diacyl-sn-glycerol. Functionally, catalyzes the addition of a phosphorylinositol group onto dihydroceramide to form phosphoinositol dihydroceramide (PI-DHC), an essential step in sphingolipid biosynthesis. The polypeptide is Phosphoinositol dihydroceramide synthase (Bacteroides thetaiotaomicron (strain ATCC 29148 / DSM 2079 / JCM 5827 / CCUG 10774 / NCTC 10582 / VPI-5482 / E50)).